The chain runs to 126 residues: Protein ApaG (126 aa).

An ApaG domain is found at 2–126 (SDPRYQIDVS…FRLAVPGALH (125 aa)).

The protein is Protein ApaG of Pseudomonas putida (strain ATCC 700007 / DSM 6899 / JCM 31910 / BCRC 17059 / LMG 24140 / F1).